A 404-amino-acid polypeptide reads, in one-letter code: Cysteine desulfurase IscS (404 aa).

Pyridoxal 5'-phosphate-binding positions include 75 to 76 (AT), Asn-155, Gln-183, and 203 to 205 (SAH). Position 206 is an N6-(pyridoxal phosphate)lysine (Lys-206). Residue Thr-243 coordinates pyridoxal 5'-phosphate. The active-site Cysteine persulfide intermediate is the Cys-328. Position 328 (Cys-328) interacts with [2Fe-2S] cluster.

The protein belongs to the class-V pyridoxal-phosphate-dependent aminotransferase family. NifS/IscS subfamily. In terms of assembly, homodimer. Forms a heterotetramer with IscU, interacts with other sulfur acceptors. The cofactor is pyridoxal 5'-phosphate.

The protein localises to the cytoplasm. The enzyme catalyses (sulfur carrier)-H + L-cysteine = (sulfur carrier)-SH + L-alanine. The protein operates within cofactor biosynthesis; iron-sulfur cluster biosynthesis. Functionally, master enzyme that delivers sulfur to a number of partners involved in Fe-S cluster assembly, tRNA modification or cofactor biosynthesis. Catalyzes the removal of elemental sulfur atoms from cysteine to produce alanine. Functions as a sulfur delivery protein for Fe-S cluster synthesis onto IscU, an Fe-S scaffold assembly protein, as well as other S acceptor proteins. This Shewanella sediminis (strain HAW-EB3) protein is Cysteine desulfurase IscS.